Reading from the N-terminus, the 504-residue chain is Maturase K (504 aa).

It belongs to the intron maturase 2 family. MatK subfamily.

Its subcellular location is the plastid. The protein localises to the chloroplast. Usually encoded in the trnK tRNA gene intron. Probably assists in splicing its own and other chloroplast group II introns. The chain is Maturase K from Guizotia abyssinica (Niger).